The sequence spans 844 residues: Receptor-like protein 49 (844 aa).

The first 31 residues, 1–31 (MMYSCRERRMITVKWSLCLIFCLSNSILVFA), serve as a signal peptide directing secretion. At 32 to 803 (KHLCLPDQRD…QDEEKEEEEQ (772 aa)) the chain is on the extracellular side. Residues N59, N95, N112, and N159 are each glycosylated (N-linked (GlcNAc...) asparagine). LRR repeat units lie at residues 102 to 126 (QHLQ…GLKG), 136 to 160 (LKYL…LGNL), 161 to 183 (SYLT…SMGN), 185 to 208 (NYLR…LGNL), 209 to 231 (SYLA…SMGN), 242 to 265 (LNSL…NMSS), 266 to 290 (LSKL…LFMI), 292 to 313 (SLVE…NISS), 315 to 339 (SKLQ…IFSP), 345 to 362 (YLDV…VSLP), 363 to 385 (SPIE…LRNQ), 386 to 409 (TKLY…LWSL), 410 to 434 (PELQ…VIQG), 436 to 457 (GELY…LLPV), 458 to 481 (DSMN…ICEL), 482 to 504 (DNLV…CFEN), 506 to 527 (HLYV…EAIS), 528 to 551 (DRLQ…LINC), 553 to 574 (ALEF…WLEL), 575 to 601 (LPNF…SLSF), 602 to 625 (PRLR…YFAP), 665 to 689 (FTIY…ISLL), 690 to 713 (KELI…LSNL), 714 to 737 (SNLQ…LGEL), and 739 to 762 (FLAR…QIQT). N207 carries an N-linked (GlcNAc...) asparagine glycan. N262 carries an N-linked (GlcNAc...) asparagine glycan. N310 carries N-linked (GlcNAc...) asparagine glycosylation. Residues N374 and N384 are each glycosylated (N-linked (GlcNAc...) asparagine). A glycan (N-linked (GlcNAc...) asparagine) is linked at N416. 3 N-linked (GlcNAc...) asparagine glycosylation sites follow: N493, N516, and N550. N-linked (GlcNAc...) asparagine glycosylation is found at N696 and N712. N-linked (GlcNAc...) asparagine glycosylation occurs at N744. Residues 804–824 (VFSWIAAAIGYVPGVVCGLTI) traverse the membrane as a helical segment. The Cytoplasmic segment spans residues 825–844 (GHILVSHKRDWFMRIVSLFT).

The protein belongs to the RLP family.

The protein resides in the cell membrane. The polypeptide is Receptor-like protein 49 (Arabidopsis thaliana (Mouse-ear cress)).